The primary structure comprises 556 residues: Urocanate hydratase (556 aa).

NAD(+) is bound by residues 52–53 (GG), Gln-130, 176–178 (GMG), Glu-196, Arg-201, 242–243 (NA), 263–267 (QTSAH), 273–274 (YL), and Tyr-322. The active site involves Cys-410. Gly-492 lines the NAD(+) pocket.

It belongs to the urocanase family. NAD(+) is required as a cofactor.

It is found in the cytoplasm. It carries out the reaction 4-imidazolone-5-propanoate = trans-urocanate + H2O. It functions in the pathway amino-acid degradation; L-histidine degradation into L-glutamate; N-formimidoyl-L-glutamate from L-histidine: step 2/3. Catalyzes the conversion of urocanate to 4-imidazolone-5-propionate. The chain is Urocanate hydratase from Shewanella sp. (strain ANA-3).